The primary structure comprises 56 residues: Botcinic acid biosynthesis cluster B protein 14 (56 aa).

Its pathway is polyketide biosynthesis. Functionally, part of the gene cluster B that mediates the biosynthesis of botcinic acid and its botcinin derivatives, acetate-derived polyketides that contribute to virulence when combined with the sesquiterpene botrydial. Botcinic acid and its derivatives have been shown to induce chlorosis and necrosis during host plant infection, but also have antifungal activities. Two polyketide synthases, BOA6 and BOA9, are involved in the biosynthesis of botcinins. BOA6 mediates the formation of the per-methylated tetraketide core by condensation of four units of malonyl-CoA with one unit of acetyl-CoA, which would be methylated in activated methylene groups to yield a bicyclic acid intermediate that could then either be converted to botrylactone derivatives or lose the starter acetate unit through a retro-Claisen type C-C bond cleavage to yield botcinin derivatives. The second polyketide synthase, BOA9, is probably required for the biosynthesis of the tetraketide side chain of botcinins. The methyltransferase (MT) domain within BOA6 is probably responsible for the incorporation of four methyl groups. The trans-enoyl reductase BOA5 might take over the enoyl reductase function of BOA6 that misses an ER domain. The monooxygenases BOA2, BOA3 and BOA4 might be involved in further hydroxylations at C4, C5 and C8, whereas BOA7, close to BOA9, could potentially be involved in the hydroxylation at C4 in the side chain of botcinins. In Botryotinia fuckeliana (strain B05.10) (Noble rot fungus), this protein is Botcinic acid biosynthesis cluster B protein 14.